Consider the following 456-residue polypeptide: Glycine--tRNA ligase (456 aa).

Residues R98 and E168 each contribute to the substrate site. Residues 200 to 202 (RNE), 210 to 215 (FRTREF), 285 to 286 (EL), and 329 to 332 (GVER) each bind ATP. 215–219 (FEQME) serves as a coordination point for substrate. 325-329 (EPSVG) contacts substrate.

This sequence belongs to the class-II aminoacyl-tRNA synthetase family. In terms of assembly, homodimer.

Its subcellular location is the cytoplasm. The catalysed reaction is tRNA(Gly) + glycine + ATP = glycyl-tRNA(Gly) + AMP + diphosphate. Catalyzes the attachment of glycine to tRNA(Gly). This chain is Glycine--tRNA ligase, found in Mycoplasma capricolum subsp. capricolum (strain California kid / ATCC 27343 / NCTC 10154).